We begin with the raw amino-acid sequence, 1047 residues long: Suppression of tumorigenicity 18 protein (1047 aa).

3 disordered regions span residues 41-92, 168-221, and 251-286; these read TAED…HSTA, FLIH…VPKY, and DSET…SESL. A compositionally biased stretch (basic residues) spans 52-65; it reads NKRKSLLMKPRHYS. The segment covering 171 to 181 has biased composition (basic and acidic residues); the sequence is HSDDGRDKIDD. CCHHC-type zinc fingers lie at residues 359–402 and 403–446; these read PRPE…PLEI and LAMH…KLAM. Positions 368, 373, 386, 392, 412, 417, 430, and 436 each coordinate Zn(2+). Disordered regions lie at residues 523–563 and 672–710; these read GRKT…SYSY and YSKT…SPKP. Positions 550-563 are enriched in polar residues; that stretch reads AHTQSPGRASSYSY. The span at 677 to 687 shows a compositional bias: basic and acidic residues; the sequence is GKTEEEKEKDP. 4 CCHHC-type zinc fingers span residues 715–758, 759–802, 807–850, and 860–903; these read RDLK…LKSL, MAAN…GVKM, EEKE…QKEN, and KLNK…IKKG. Positions 724, 729, 742, 748, 768, 773, 786, 792, 816, 821, 834, 840, 869, 874, 887, and 893 each coordinate Zn(2+). A coiled-coil region spans residues 920–992; it reads IESDEEIRHL…AGLSQALISS (73 aa).

The protein belongs to the MYT1 family. As to expression, detected at low levels in heart, liver, kidney, skeletal muscle, pancreas, testis, ovary and prostate. Detected at even lower levels in mammary epithelial cells and breast cancer cells.

Its subcellular location is the nucleus. Functionally, repressor that binds to DNA sequences containing a bipartite element consisting of a direct repeat of the sequence 5'-AAAGTTT-3' separated by 2-9 nucleotides. Represses basal transcription activity from target promoters. Inhibits colony formation in cultured breast cancer cells. This Homo sapiens (Human) protein is Suppression of tumorigenicity 18 protein (ST18).